The following is a 118-amino-acid chain: MAEQVTSARATAKIVRVAPRKARLVLDTIRRKSVNEAYAILKFLPNTSTEDIYKVLNSAVANAENNFSLDREDLIVKEAFANEGPTLKRFRPRAKGSASPINKRTSHLTIVVAEKEAK.

It belongs to the universal ribosomal protein uL22 family. As to quaternary structure, part of the 50S ribosomal subunit.

Functionally, this protein binds specifically to 23S rRNA; its binding is stimulated by other ribosomal proteins, e.g. L4, L17, and L20. It is important during the early stages of 50S assembly. It makes multiple contacts with different domains of the 23S rRNA in the assembled 50S subunit and ribosome. In terms of biological role, the globular domain of the protein is located near the polypeptide exit tunnel on the outside of the subunit, while an extended beta-hairpin is found that lines the wall of the exit tunnel in the center of the 70S ribosome. This is Large ribosomal subunit protein uL22 from Leuconostoc mesenteroides subsp. mesenteroides (strain ATCC 8293 / DSM 20343 / BCRC 11652 / CCM 1803 / JCM 6124 / NCDO 523 / NBRC 100496 / NCIMB 8023 / NCTC 12954 / NRRL B-1118 / 37Y).